Here is a 249-residue protein sequence, read N- to C-terminus: DNA polymerase sliding clamp (249 aa).

The protein belongs to the PCNA family. As to quaternary structure, homotrimer. The subunits circularize to form a toroid; DNA passes through its center. Replication factor C (RFC) is required to load the toroid on the DNA.

In terms of biological role, sliding clamp subunit that acts as a moving platform for DNA processing. Responsible for tethering the catalytic subunit of DNA polymerase and other proteins to DNA during high-speed replication. The polypeptide is DNA polymerase sliding clamp (Nanoarchaeum equitans (strain Kin4-M)).